The following is a 507-amino-acid chain: MATLRADEISNIIRERIEQYNREVKIVNTGTVLQVGDGIARIHGLDEVMAGELVEFEEKTVGIALNLESNNVGVVLMGDGLMIQEGSSVKATGRIAQIPVSEDYLGRVINALAKPIDGRGEISASESRLIESPAPGIISRRSVYEPMQTGLIAIDAMIPIGRGQRELIIGDRQTGKTAVATDTILNQKGQNVICVYVAIGQKASSVAQVVTTFQEQGVMEYTIVVAETADAPATLQYLAPYTGAALAEYFMYRERHTLIIYDDLSKQAQAYRQMSLLLRRPPGREAYPGDVFYLHSRLLERAAKLSSRLGEGSMTALPIVETQSGDVSAYIPTNVISITDGQIFLSADLFNSGIRPAINVGISVSRVGSAAQIKAMKQVAGKLKLELAQFAELEAFAQFASDLDKATQNQLARGQRLRELLKQSQAAPLTVEEQVVTIYTGTNGYLDSLEIGQVKKFLVQLRTYLKSSKPQFQEIISSTKTFTEEAEVLLKEAIQEQMERFLLQEQT.

An ATP-binding site is contributed by 170 to 177 (GDRQTGKT).

This sequence belongs to the ATPase alpha/beta chains family. As to quaternary structure, F-type ATPases have 2 components, CF(1) - the catalytic core - and CF(0) - the membrane proton channel. CF(1) has five subunits: alpha(3), beta(3), gamma(1), delta(1), epsilon(1). CF(0) has four main subunits: a, b, b' and c.

The protein resides in the plastid. It localises to the chloroplast thylakoid membrane. It carries out the reaction ATP + H2O + 4 H(+)(in) = ADP + phosphate + 5 H(+)(out). Functionally, produces ATP from ADP in the presence of a proton gradient across the membrane. The alpha chain is a regulatory subunit. The polypeptide is ATP synthase subunit alpha, chloroplastic (Ranunculus macranthus (Large buttercup)).